A 441-amino-acid polypeptide reads, in one-letter code: tRNA modification GTPase MnmE (441 aa).

(6S)-5-formyl-5,6,7,8-tetrahydrofolate-binding residues include arginine 21, glutamate 79, and lysine 118. The TrmE-type G domain occupies 214–367 (GIHITILGAP…LVAELARVVE (154 aa)). Residues 224 to 229 (NAGKSS), 243 to 249 (SAQAGTT), and 268 to 271 (DTAG) each bind GTP. 2 residues coordinate Mg(2+): serine 228 and threonine 249. Lysine 441 contacts (6S)-5-formyl-5,6,7,8-tetrahydrofolate.

Belongs to the TRAFAC class TrmE-Era-EngA-EngB-Septin-like GTPase superfamily. TrmE GTPase family. As to quaternary structure, homodimer. Heterotetramer of two MnmE and two MnmG subunits. K(+) serves as cofactor.

Its subcellular location is the cytoplasm. Its function is as follows. Exhibits a very high intrinsic GTPase hydrolysis rate. Involved in the addition of a carboxymethylaminomethyl (cmnm) group at the wobble position (U34) of certain tRNAs, forming tRNA-cmnm(5)s(2)U34. This Paramagnetospirillum magneticum (strain ATCC 700264 / AMB-1) (Magnetospirillum magneticum) protein is tRNA modification GTPase MnmE.